A 293-amino-acid polypeptide reads, in one-letter code: Nucleotide-binding protein LBA0691 (293 aa).

ATP is bound at residue 13–20 (GMSGAGKT). 63–66 (DLRV) provides a ligand contact to GTP.

This sequence belongs to the RapZ-like family.

Functionally, displays ATPase and GTPase activities. The polypeptide is Nucleotide-binding protein LBA0691 (Lactobacillus acidophilus (strain ATCC 700396 / NCK56 / N2 / NCFM)).